We begin with the raw amino-acid sequence, 418 residues long: Histidinol dehydrogenase (418 aa).

Tyrosine 119, glutamine 180, and asparagine 203 together coordinate NAD(+). Residues threonine 226, glutamine 248, and histidine 251 each contribute to the substrate site. 2 residues coordinate Zn(2+): glutamine 248 and histidine 251. Catalysis depends on proton acceptor residues glutamate 316 and histidine 317. The substrate site is built by histidine 317, aspartate 350, glutamate 404, and histidine 409. A Zn(2+)-binding site is contributed by aspartate 350. Histidine 409 provides a ligand contact to Zn(2+).

This sequence belongs to the histidinol dehydrogenase family. It depends on Zn(2+) as a cofactor.

The enzyme catalyses L-histidinol + 2 NAD(+) + H2O = L-histidine + 2 NADH + 3 H(+). It participates in amino-acid biosynthesis; L-histidine biosynthesis; L-histidine from 5-phospho-alpha-D-ribose 1-diphosphate: step 9/9. Functionally, catalyzes the sequential NAD-dependent oxidations of L-histidinol to L-histidinaldehyde and then to L-histidine. The protein is Histidinol dehydrogenase of Staphylococcus aureus (strain COL).